We begin with the raw amino-acid sequence, 189 residues long: dCTP deaminase (189 aa).

DCTP is bound by residues Lys112–Arg117, Thr136–Glu138, Gln157, Tyr171, and Gln181. The Proton donor/acceptor role is filled by Glu138.

It belongs to the dCTP deaminase family. Homotrimer.

The enzyme catalyses dCTP + H2O + H(+) = dUTP + NH4(+). It functions in the pathway pyrimidine metabolism; dUMP biosynthesis; dUMP from dCTP (dUTP route): step 1/2. Its function is as follows. Catalyzes the deamination of dCTP to dUTP. The polypeptide is dCTP deaminase (Acinetobacter baumannii (strain SDF)).